The chain runs to 275 residues: Ceramide synthase (275 aa).

The TLC domain maps to 34–261; sequence ADAVIVSARL…ICRGACRLFR (228 aa). The next 4 membrane-spanning stretches (helical) occupy residues 130-150, 159-179, 194-214, and 232-252; these read FLMVLHHAAMVLVCFPLSVVW, LGCMLMAEVSTPFVCLGKILI, ALMLLSFLCCRVLLFPYLYWA, and AHVNLGAALLLAPQLYWFFLI.

As to expression, each isoform has a distinct expression pattern. Isoform 1 is highly expressed in brain. Isoform 2 is expressed at low levels, if any, in all analyzed tissues, with slightly higher levels in testis. Isoform 3 is expressed at very high levels in testis and, at lower levels, in white adipose tissue. In epididymal fat, isoform 3 is expressed at higher levels in obese mice compared with lean mice. By contrast, isoform 1 and 2 levels are significantly lower in obese mice compared with lean mice.

It is found in the golgi apparatus membrane. Its subcellular location is the endoplasmic reticulum membrane. It carries out the reaction sphing-4-enine + octadecanoyl-CoA = N-octadecanoylsphing-4-enine + CoA + H(+). The catalysed reaction is eicosanoyl-CoA + sphing-4-enine = N-eicosanoyl-sphing-4-enine + CoA + H(+). It catalyses the reaction sphing-4-enine + hexadecanoyl-CoA = N-hexadecanoylsphing-4-enine + CoA + H(+). Involved in ceramide synthesis. In vitro, isoform 3 stimulates the production of C16-, C18- and C20-ceramides, isoform 1 slightly increases the levels of C18- and C20-ceramides, while isoform 2 exhibits only minimal activity. May interfere with adipogenesis by stimulating ceramide synthesis. This chain is Ceramide synthase (Tlcd3b), found in Mus musculus (Mouse).